Consider the following 164-residue polypeptide: MGVFSSPMSTLRWVTLFAALLSLLEWGTAHEDIVMDGDQVVQQQGRSCDPQRLSACRDYLQRRREQPSERCCEELQRMSPHCRCRAIERALDQSQSYDSSTDSDSQDGAPLNQRRRRRGEGRGREEEEAVERAEELPNRCNLRESPRRCDIRRHSRYSIIGGSD.

The first 29 residues, 1 to 29, serve as a signal peptide directing secretion; it reads MGVFSSPMSTLRWVTLFAALLSLLEWGTA. Over residues 92-107 the composition is skewed to low complexity; sequence DQSQSYDSSTDSDSQD. The disordered stretch occupies residues 92–137; it reads DQSQSYDSSTDSDSQDGAPLNQRRRRRGEGRGREEEEAVERAEELP. Over residues 120–137 the composition is skewed to basic and acidic residues; it reads EGRGREEEEAVERAEELP. A glycan (N-linked (GalNAc...) asparagine) is linked at asparagine 138.

Belongs to the 2S seed storage albumins family.

The protein is 2S albumin seed storage protein PINP1 of Pinus pinea (Italian stone pine).